A 154-amino-acid polypeptide reads, in one-letter code: Prefoldin subunit 2 (154 aa).

Residues 124–139 (IRLMGEDEKPAAKENS) are compositionally biased toward basic and acidic residues. The tract at residues 124–154 (IRLMGEDEKPAAKENSEGAGAKASSAGVLVS) is disordered. Low complexity predominate over residues 140 to 154 (EGAGAKASSAGVLVS).

This sequence belongs to the prefoldin subunit beta family. Heterohexamer of two PFD-alpha type and four PFD-beta type subunits. Component of the PAQosome complex which is responsible for the biogenesis of several protein complexes and which consists of R2TP complex members RUVBL1, RUVBL2, RPAP3 and PIH1D1, URI complex members PFDN2, PFDN6, PDRG1, UXT and URI1 as well as ASDURF, POLR2E and DNAAF10/WDR92. Interacts with URI1; the interaction is phosphorylation-dependent and occurs in a growth-dependent manner.

The protein resides in the nucleus. Its subcellular location is the cytoplasm. It is found in the mitochondrion. In terms of biological role, binds specifically to cytosolic chaperonin (c-CPN) and transfers target proteins to it. Binds to nascent polypeptide chain and promotes folding in an environment in which there are many competing pathways for nonnative proteins. In Homo sapiens (Human), this protein is Prefoldin subunit 2 (PFDN2).